A 130-amino-acid polypeptide reads, in one-letter code: Small ribosomal subunit protein uS11c (130 aa).

Belongs to the universal ribosomal protein uS11 family. In terms of assembly, part of the 30S ribosomal subunit.

It localises to the plastid. It is found in the chloroplast. The chain is Small ribosomal subunit protein uS11c from Trieres chinensis (Marine centric diatom).